Reading from the N-terminus, the 285-residue chain is Protease HtpX homolog (285 aa).

The next 2 membrane-spanning stretches (helical) occupy residues 7–27 (TAML…MIGG) and 30–50 (GMTI…WFSD). H131 serves as a coordination point for Zn(2+). Residue E132 is part of the active site. Residue H135 coordinates Zn(2+). Helical transmembrane passes span 146-166 (ISAT…FFGG) and 177-197 (IAGI…QMAI). E202 contacts Zn(2+).

It belongs to the peptidase M48B family. The cofactor is Zn(2+).

Its subcellular location is the cell inner membrane. This is Protease HtpX homolog from Burkholderia mallei (strain NCTC 10247).